An 84-amino-acid chain; its full sequence is Small ribosomal subunit protein uS17 (84 aa).

This sequence belongs to the universal ribosomal protein uS17 family. Part of the 30S ribosomal subunit.

One of the primary rRNA binding proteins, it binds specifically to the 5'-end of 16S ribosomal RNA. The sequence is that of Small ribosomal subunit protein uS17 from Karelsulcia muelleri (strain GWSS) (Sulcia muelleri).